Reading from the N-terminus, the 311-residue chain is HPr kinase/phosphorylase (311 aa).

Residues His-138 and Lys-159 contribute to the active site. ATP is bound at residue Gly-153–Ser-160. Ser-160 contacts Mg(2+). Asp-177 acts as the Proton acceptor; for phosphorylation activity. Proton donor; for dephosphorylation activity in catalysis. The segment at Leu-201–Asp-210 is important for the catalytic mechanism of both phosphorylation and dephosphorylation. Glu-202 provides a ligand contact to Mg(2+). Residue Arg-243 is part of the active site. An important for the catalytic mechanism of dephosphorylation region spans residues Pro-264–Arg-269.

The protein belongs to the HPrK/P family. Homohexamer. Requires Mg(2+) as cofactor.

The enzyme catalyses [HPr protein]-L-serine + ATP = [HPr protein]-O-phospho-L-serine + ADP + H(+). It carries out the reaction [HPr protein]-O-phospho-L-serine + phosphate + H(+) = [HPr protein]-L-serine + diphosphate. Functionally, catalyzes the ATP- as well as the pyrophosphate-dependent phosphorylation of a specific serine residue in HPr, a phosphocarrier protein of the phosphoenolpyruvate-dependent sugar phosphotransferase system (PTS). HprK/P also catalyzes the pyrophosphate-producing, inorganic phosphate-dependent dephosphorylation (phosphorolysis) of seryl-phosphorylated HPr (P-Ser-HPr). The two antagonistic activities of HprK/P are regulated by several intracellular metabolites, which change their concentration in response to the absence or presence of rapidly metabolisable carbon sources (glucose, fructose, etc.) in the growth medium. Therefore, by controlling the phosphorylation state of HPr, HPrK/P is a sensor enzyme that plays a major role in the regulation of carbon metabolism and sugar transport: it mediates carbon catabolite repression (CCR), and regulates PTS-catalyzed carbohydrate uptake and inducer exclusion. This is HPr kinase/phosphorylase from Streptococcus agalactiae serotype Ia (strain ATCC 27591 / A909 / CDC SS700).